Reading from the N-terminus, the 815-residue chain is Kinesin heavy chain (815 aa).

One can recognise a Kinesin motor domain in the interval 11 to 329 (GVQVFCRIRP…LLFGARAKTI (319 aa)). 88 to 95 (GQTSSGKT) lines the ATP pocket. 3 coiled-coil regions span residues 335–374 (INEE…RWRA), 422–554 (PITD…LDEC), and 695–785 (PAQK…RMNA). The segment at 788–815 (IVKPIRPGQVYTSPSAGMSQGAPNGSNA) is disordered. The segment covering 797-815 (VYTSPSAGMSQGAPNGSNA) has biased composition (polar residues).

Belongs to the TRAFAC class myosin-kinesin ATPase superfamily. Kinesin family. Kinesin subfamily. Oligomer composed of two heavy chains and two light chains.

The protein localises to the cytoplasm. It is found in the cytoskeleton. Microtubule-dependent motor protein required for organelle transport. Plays a role in endosome transport. Required for the transport of mitochondria along the axon of motor neurons. Involved in the nuclear migration of hyp7 hypodermal precursor cells. Required for the formation of dendritic branches of PVD sensory neurons. In non-ciliated neurons such as the PVD and PHC neurons, required for the organization of minus-end out microtubules in dendrites. Also required for the minus-end out orientation of microtubules in dendrites of AQR gas-sensing neurons. Involved in the localization of unc-33 to neurites. Positively regulates cilium position and dendrite morphogenesis in the postembryonic AQR and PQR gas-sensing neurons. Plays a more prominent role in regulating dendrite morphogenesis in AQR than in PQR neurons. Plays a role in regulating the localization of grdn-1 to the distal dendrites of AQR sensory neurons. The sequence is that of Kinesin heavy chain from Caenorhabditis elegans.